The sequence spans 347 residues: Endo-1,4-beta-xylanase 3 (347 aa).

The N-terminal stretch at 1–16 (MKANVILCLLAPLVAA) is a signal peptide. A propeptide spanning residues 17–45 (LPTETIHLDPELAALRANLTERTADLWDR) is cleaved from the precursor. Position 46 is a pyrrolidone carboxylic acid (Q46). The region spanning 46–345 (QASQSIDQLI…KPAYNSIVGI (300 aa)) is the GH10 domain. E176 acts as the Proton donor in catalysis. The active-site Nucleophile is E282. C300 and C306 are disulfide-bonded.

This sequence belongs to the glycosyl hydrolase 10 (cellulase F) family. As to quaternary structure, monomer. Not glycosylated.

It localises to the secreted. The enzyme catalyses Endohydrolysis of (1-&gt;4)-beta-D-xylosidic linkages in xylans.. It functions in the pathway glycan degradation; xylan degradation. Its function is as follows. Glycoside hydrolase involved in the hydrolysis of xylan, a major plant cell wall hemicellulose made up of 1,4-beta-linked D-xylopyranose residues. Catalyzes the endohydrolysis of the main-chain 1,4-beta-glycosidic bonds connecting the xylose subunits yielding various xylooligosaccharides and xylose. Produces xylobiose and xylotriose as the main degradation products. This chain is Endo-1,4-beta-xylanase 3 (xyn3), found in Hypocrea jecorina (strain QM6a) (Trichoderma reesei).